Consider the following 449-residue polypeptide: Tubulin alpha chain (449 aa).

Positions 11, 71, 140, 144, 145, 179, 206, and 228 each coordinate GTP. Mg(2+) is bound at residue glutamate 71. Glutamate 254 is an active-site residue.

This sequence belongs to the tubulin family. Dimer of alpha and beta chains. A typical microtubule is a hollow water-filled tube with an outer diameter of 25 nm and an inner diameter of 15 nM. Alpha-beta heterodimers associate head-to-tail to form protofilaments running lengthwise along the microtubule wall with the beta-tubulin subunit facing the microtubule plus end conferring a structural polarity. Microtubules usually have 13 protofilaments but different protofilament numbers can be found in some organisms and specialized cells. It depends on Mg(2+) as a cofactor.

It localises to the cytoplasm. It is found in the cytoskeleton. The catalysed reaction is GTP + H2O = GDP + phosphate + H(+). Its function is as follows. Tubulin is the major constituent of microtubules, a cylinder consisting of laterally associated linear protofilaments composed of alpha- and beta-tubulin heterodimers. Microtubules grow by the addition of GTP-tubulin dimers to the microtubule end, where a stabilizing cap forms. Below the cap, tubulin dimers are in GDP-bound state, owing to GTPase activity of alpha-tubulin. This chain is Tubulin alpha chain (TUB1), found in Gibberella zeae (strain ATCC MYA-4620 / CBS 123657 / FGSC 9075 / NRRL 31084 / PH-1) (Wheat head blight fungus).